We begin with the raw amino-acid sequence, 128 residues long: Mini-ribonuclease 3 (128 aa).

The active site involves D17.

This sequence belongs to the MrnC RNase family. In terms of assembly, homodimer. Requires Mg(2+) as cofactor.

The protein localises to the cytoplasm. Involved in correct processing of both the 5' and 3' ends of 23S rRNA precursor. Processes 30S rRNA precursor transcript even in absence of ribonuclease 3 (Rnc); Rnc processes 30S rRNA into smaller rRNA precursors. This is Mini-ribonuclease 3 from Streptococcus pneumoniae (strain ATCC BAA-255 / R6).